A 162-amino-acid polypeptide reads, in one-letter code: NADH-quinone oxidoreductase subunit I (162 aa).

2 4Fe-4S ferredoxin-type domains span residues 52–82 (LRRY…IEAG) and 93–122 (TRYD…EGPN). Residues cysteine 62, cysteine 65, cysteine 68, cysteine 72, cysteine 102, cysteine 105, cysteine 108, and cysteine 112 each coordinate [4Fe-4S] cluster.

It belongs to the complex I 23 kDa subunit family. NDH-1 is composed of 14 different subunits. Subunits NuoA, H, J, K, L, M, N constitute the membrane sector of the complex. It depends on [4Fe-4S] cluster as a cofactor.

It is found in the cell inner membrane. The enzyme catalyses a quinone + NADH + 5 H(+)(in) = a quinol + NAD(+) + 4 H(+)(out). NDH-1 shuttles electrons from NADH, via FMN and iron-sulfur (Fe-S) centers, to quinones in the respiratory chain. The immediate electron acceptor for the enzyme in this species is believed to be ubiquinone. Couples the redox reaction to proton translocation (for every two electrons transferred, four hydrogen ions are translocated across the cytoplasmic membrane), and thus conserves the redox energy in a proton gradient. The sequence is that of NADH-quinone oxidoreductase subunit I from Methylobacterium sp. (strain 4-46).